A 125-amino-acid chain; its full sequence is uncharacterized protein (125 aa).

This is an uncharacterized protein from Escherichia coli (strain K12).